The sequence spans 928 residues: DNA ligase 4 (928 aa).

ATP is bound by residues Glu302, Lys304, Arg309, Glu362, Phe409, Glu469, Lys474, Lys492, and Lys494. Lys304 serves as the catalytic N6-AMP-lysine intermediate. Glu362 lines the Mg(2+) pocket. Glu469 contributes to the Mg(2+) binding site. BRCT domains lie at 673–769 (VESD…PYFI) and 821–927 (PWIY…DYKF).

The protein belongs to the ATP-dependent DNA ligase family. It depends on Mg(2+) as a cofactor.

Its subcellular location is the nucleus. The enzyme catalyses ATP + (deoxyribonucleotide)n-3'-hydroxyl + 5'-phospho-(deoxyribonucleotide)m = (deoxyribonucleotide)n+m + AMP + diphosphate.. In terms of biological role, DNA ligase involved in DNA non-homologous end joining (NHEJ); required for double-strand break (DSB) repair. Not required for the repair of DSBs induced by ionizing radiation or UV light. Has an important role in morphogenesis, positively affecting the capacity to form hyphae. This chain is DNA ligase 4 (LIG4), found in Candida albicans (strain SC5314 / ATCC MYA-2876) (Yeast).